A 184-amino-acid chain; its full sequence is ATP synthase subunit b, chloroplastic (184 aa).

The chain crosses the membrane as a helical span at residues 31 to 49 (IINPSVVLSVLIYFGKGVL).

Belongs to the ATPase B chain family. In terms of assembly, F-type ATPases have 2 components, F(1) - the catalytic core - and F(0) - the membrane proton channel. F(1) has five subunits: alpha(3), beta(3), gamma(1), delta(1), epsilon(1). F(0) has four main subunits: a(1), b(1), b'(1) and c(10-14). The alpha and beta chains form an alternating ring which encloses part of the gamma chain. F(1) is attached to F(0) by a central stalk formed by the gamma and epsilon chains, while a peripheral stalk is formed by the delta, b and b' chains.

It localises to the plastid. The protein localises to the chloroplast thylakoid membrane. F(1)F(0) ATP synthase produces ATP from ADP in the presence of a proton or sodium gradient. F-type ATPases consist of two structural domains, F(1) containing the extramembraneous catalytic core and F(0) containing the membrane proton channel, linked together by a central stalk and a peripheral stalk. During catalysis, ATP synthesis in the catalytic domain of F(1) is coupled via a rotary mechanism of the central stalk subunits to proton translocation. Functionally, component of the F(0) channel, it forms part of the peripheral stalk, linking F(1) to F(0). This chain is ATP synthase subunit b, chloroplastic, found in Pinus koraiensis (Korean pine).